The sequence spans 61 residues: Small ribosomal subunit protein uS14 (61 aa).

Residues Cys-24, Cys-27, Cys-40, and Cys-43 each contribute to the Zn(2+) site.

The protein belongs to the universal ribosomal protein uS14 family. Zinc-binding uS14 subfamily. Part of the 30S ribosomal subunit. Contacts proteins S3 and S10. The cofactor is Zn(2+).

Binds 16S rRNA, required for the assembly of 30S particles and may also be responsible for determining the conformation of the 16S rRNA at the A site. The polypeptide is Small ribosomal subunit protein uS14 (Halothermothrix orenii (strain H 168 / OCM 544 / DSM 9562)).